Here is a 266-residue protein sequence, read N- to C-terminus: Ribosomal RNA small subunit methyltransferase J (266 aa).

Residues 109–110 (RD), 125–126 (ER), and Asp185 contribute to the S-adenosyl-L-methionine site.

This sequence belongs to the methyltransferase superfamily. RsmJ family.

It is found in the cytoplasm. It catalyses the reaction guanosine(1516) in 16S rRNA + S-adenosyl-L-methionine = N(2)-methylguanosine(1516) in 16S rRNA + S-adenosyl-L-homocysteine + H(+). Specifically methylates the guanosine in position 1516 of 16S rRNA. This is Ribosomal RNA small subunit methyltransferase J from Cellvibrio japonicus (strain Ueda107) (Pseudomonas fluorescens subsp. cellulosa).